Reading from the N-terminus, the 380-residue chain is Crotonobetainyl-CoA reductase (380 aa).

The protein belongs to the acyl-CoA dehydrogenase family. Homotetramer. Requires FAD as cofactor.

The protein localises to the cytoplasm. It catalyses the reaction 4-(trimethylamino)butanoyl-CoA + oxidized [electron-transfer flavoprotein] + H(+) = crotonobetainyl-CoA + reduced [electron-transfer flavoprotein]. Its pathway is amine and polyamine metabolism; carnitine metabolism. In terms of biological role, catalyzes the reduction of crotonobetainyl-CoA to gamma-butyrobetainyl-CoA. This is Crotonobetainyl-CoA reductase from Salmonella typhi.